The chain runs to 87 residues: DNA-directed RNA polymerase subunit omega (87 aa).

It belongs to the RNA polymerase subunit omega family. In terms of assembly, the RNAP catalytic core consists of 2 alpha, 1 beta, 1 beta' and 1 omega subunit. When a sigma factor is associated with the core the holoenzyme is formed, which can initiate transcription.

It catalyses the reaction RNA(n) + a ribonucleoside 5'-triphosphate = RNA(n+1) + diphosphate. Functionally, promotes RNA polymerase assembly. Latches the N- and C-terminal regions of the beta' subunit thereby facilitating its interaction with the beta and alpha subunits. The chain is DNA-directed RNA polymerase subunit omega from Leifsonia xyli subsp. xyli (strain CTCB07).